Consider the following 39-residue polypeptide: Phospholipase A2 (39 aa).

Ca(2+) is bound by residues Trp10, Gly12, and Gly14. A disulfide bridge connects residues Cys11 and Cys33. The active site involves His36. Residue Asp37 participates in Ca(2+) binding.

Ca(2+) is required as a cofactor. In terms of tissue distribution, expressed uniformly in tentacles (at protein level).

The protein localises to the secreted. Its subcellular location is the nematocyst. It catalyses the reaction a 1,2-diacyl-sn-glycero-3-phosphocholine + H2O = a 1-acyl-sn-glycero-3-phosphocholine + a fatty acid + H(+). With respect to regulation, inhibited by morin and p-BPB. Functionally, PA2 catalyzes the calcium-dependent hydrolysis of the 2-acyl groups in 3-sn-phosphoglycerides. Induces insulin secretion in isolated rat islets under high glucose concentration conditions, but not under low glucose concentration conditions. Increases perfusion pressure, renal vascular resistance, urinary flow, glomerular filtration rate, and potassium, sodium, and chloride excretion levels in rat kidney. Does not increase perfusion pressure in the rat mesenteric vascular bed. The sequence is that of Phospholipase A2 from Bunodosoma caissarum (Sea anemone).